The chain runs to 244 residues: 6-carboxyhexanoate--CoA ligase (244 aa).

Belongs to the BioW family. Homodimer. It depends on Mg(2+) as a cofactor.

The enzyme catalyses heptanedioate + ATP + CoA = 6-carboxyhexanoyl-CoA + AMP + diphosphate. The protein operates within metabolic intermediate metabolism; pimeloyl-CoA biosynthesis; pimeloyl-CoA from pimelate: step 1/1. In terms of biological role, catalyzes the transformation of pimelate into pimeloyl-CoA with concomitant hydrolysis of ATP to AMP. This is 6-carboxyhexanoate--CoA ligase from Hydrogenobacter thermophilus (strain DSM 6534 / IAM 12695 / TK-6).